The chain runs to 306 residues: NAD-dependent protein deacylase (306 aa).

One can recognise a Deacetylase sirtuin-type domain in the interval 1–305; the sequence is MNKQLKEFQE…PIALKPLIGD (305 aa). 23–42 is an NAD(+) binding site; sequence GAGLSASSGLPTFRGSQGLW. Residues Y67 and R70 each contribute to the substrate site. 103–106 serves as a coordination point for NAD(+); the sequence is QNVD. H123 serves as the catalytic Proton acceptor. Zn(2+) is bound by residues C131, C136, C200, and C203. NAD(+)-binding positions include 243–245, 269–271, and A291; these read GTS and NTD.

The protein belongs to the sirtuin family. Class III subfamily. Zn(2+) is required as a cofactor.

The protein resides in the mitochondrion. The enzyme catalyses N(6)-malonyl-L-lysyl-[protein] + NAD(+) + H2O = 2''-O-malonyl-ADP-D-ribose + nicotinamide + L-lysyl-[protein]. It catalyses the reaction N(6)-succinyl-L-lysyl-[protein] + NAD(+) + H2O = 2''-O-succinyl-ADP-D-ribose + nicotinamide + L-lysyl-[protein]. It carries out the reaction N(6)-glutaryl-L-lysyl-[protein] + NAD(+) + H2O = 2''-O-glutaryl-ADP-D-ribose + nicotinamide + L-lysyl-[protein]. Functionally, NAD-dependent lysine demalonylase, desuccinylase and deglutarylase that specifically removes malonyl, succinyl and glutaryl groups on target proteins. Has weak NAD-dependent protein deacetylase activity; however this activity may not be physiologically relevant in vivo. This chain is NAD-dependent protein deacylase, found in Candida albicans (strain SC5314 / ATCC MYA-2876) (Yeast).